Consider the following 154-residue polypeptide: Proteasome subunit beta type-4 (154 aa).

Methionine 1 bears the N-acetylmethionine mark. Residues 1–45 (MESILESRSGHWAGGPAPGQFYRIPPTPGSIVDPXSVLYGSPITR) constitute a propeptide that is removed on maturation. Tyrosine 102 bears the Phosphotyrosine mark.

This sequence belongs to the peptidase T1B family. In terms of assembly, the 26S proteasome consists of a 20S proteasome core and two 19S regulatory subunits. The 20S proteasome core is a barrel-shaped complex made of 28 subunits that are arranged in four stacked rings. The two outer rings are each formed by seven alpha subunits, and the two inner rings are formed by seven beta subunits. The proteolytic activity is exerted by three beta-subunits PSMB5, PSMB6 and PSMB7. Forms a ternary complex with SMAD1 and OAZ1 before PSMB4 is incorporated into the 20S proteasome. Interacts with PRPF19.

The protein resides in the cytoplasm. It localises to the nucleus. In terms of biological role, non-catalytic component of the 20S core proteasome complex involved in the proteolytic degradation of most intracellular proteins. This complex plays numerous essential roles within the cell by associating with different regulatory particles. Associated with two 19S regulatory particles, forms the 26S proteasome and thus participates in the ATP-dependent degradation of ubiquitinated proteins. The 26S proteasome plays a key role in the maintenance of protein homeostasis by removing misfolded or damaged proteins that could impair cellular functions, and by removing proteins whose functions are no longer required. Associated with the PA200 or PA28, the 20S proteasome mediates ubiquitin-independent protein degradation. This type of proteolysis is required in several pathways including spermatogenesis (20S-PA200 complex) or generation of a subset of MHC class I-presented antigenic peptides (20S-PA28 complex). SMAD1/OAZ1/PSMB4 complex mediates the degradation of the CREBBP/EP300 repressor SNIP1. The chain is Proteasome subunit beta type-4 (PSMB4) from Sus scrofa (Pig).